Here is a 417-residue protein sequence, read N- to C-terminus: NADH-quinone oxidoreductase subunit D (417 aa).

It belongs to the complex I 49 kDa subunit family. As to quaternary structure, NDH-1 is composed of 14 different subunits. Subunits NuoB, C, D, E, F, and G constitute the peripheral sector of the complex.

The protein resides in the cell inner membrane. It carries out the reaction a quinone + NADH + 5 H(+)(in) = a quinol + NAD(+) + 4 H(+)(out). In terms of biological role, NDH-1 shuttles electrons from NADH, via FMN and iron-sulfur (Fe-S) centers, to quinones in the respiratory chain. The immediate electron acceptor for the enzyme in this species is believed to be ubiquinone. Couples the redox reaction to proton translocation (for every two electrons transferred, four hydrogen ions are translocated across the cytoplasmic membrane), and thus conserves the redox energy in a proton gradient. In Nitrosomonas eutropha (strain DSM 101675 / C91 / Nm57), this protein is NADH-quinone oxidoreductase subunit D.